Here is a 255-residue protein sequence, read N- to C-terminus: 1-(5-phosphoribosyl)-5-[(5-phosphoribosylamino)methylideneamino] imidazole-4-carboxamide isomerase (255 aa).

The Proton acceptor role is filled by aspartate 8. Aspartate 129 (proton donor) is an active-site residue.

The protein belongs to the HisA/HisF family.

The protein resides in the cytoplasm. It catalyses the reaction 1-(5-phospho-beta-D-ribosyl)-5-[(5-phospho-beta-D-ribosylamino)methylideneamino]imidazole-4-carboxamide = 5-[(5-phospho-1-deoxy-D-ribulos-1-ylimino)methylamino]-1-(5-phospho-beta-D-ribosyl)imidazole-4-carboxamide. The protein operates within amino-acid biosynthesis; L-histidine biosynthesis; L-histidine from 5-phospho-alpha-D-ribose 1-diphosphate: step 4/9. This chain is 1-(5-phosphoribosyl)-5-[(5-phosphoribosylamino)methylideneamino] imidazole-4-carboxamide isomerase, found in Prochlorococcus marinus (strain AS9601).